Here is a 380-residue protein sequence, read N- to C-terminus: Cytochrome b (380 aa).

The next 4 membrane-spanning stretches (helical) occupy residues 33 to 53 (FGSL…FLAM), 77 to 98 (WLIR…YLHI), 113 to 133 (WNIG…GYVL), and 178 to 198 (FFAF…LHFF). Positions 83 and 97 each coordinate heme b. Positions 182 and 196 each coordinate heme b. Histidine 201 is a binding site for a ubiquinone. A run of 4 helical transmembrane segments spans residues 226-246 (YKDL…SFFS), 288-308 (LGGV…PILH), 320-340 (LTQL…WIGG), and 347-367 (FIAV…ILIP).

It belongs to the cytochrome b family. As to quaternary structure, the cytochrome bc1 complex contains 3 respiratory subunits (MT-CYB, CYC1 and UQCRFS1), 2 core proteins (UQCRC1 and UQCRC2) and probably 6 low-molecular weight proteins. Requires heme b as cofactor.

The protein localises to the mitochondrion inner membrane. In terms of biological role, component of the ubiquinol-cytochrome c reductase complex (complex III or cytochrome b-c1 complex) that is part of the mitochondrial respiratory chain. The b-c1 complex mediates electron transfer from ubiquinol to cytochrome c. Contributes to the generation of a proton gradient across the mitochondrial membrane that is then used for ATP synthesis. The sequence is that of Cytochrome b (mt-cyb) from Zenopsis nebulosa (Mirror dory).